A 284-amino-acid chain; its full sequence is 2-dehydro-3-deoxyphosphooctonate aldolase (284 aa).

It belongs to the KdsA family.

Its subcellular location is the cytoplasm. It catalyses the reaction D-arabinose 5-phosphate + phosphoenolpyruvate + H2O = 3-deoxy-alpha-D-manno-2-octulosonate-8-phosphate + phosphate. Its pathway is carbohydrate biosynthesis; 3-deoxy-D-manno-octulosonate biosynthesis; 3-deoxy-D-manno-octulosonate from D-ribulose 5-phosphate: step 2/3. The protein operates within bacterial outer membrane biogenesis; lipopolysaccharide biosynthesis. The polypeptide is 2-dehydro-3-deoxyphosphooctonate aldolase (Erwinia tasmaniensis (strain DSM 17950 / CFBP 7177 / CIP 109463 / NCPPB 4357 / Et1/99)).